The sequence spans 349 residues: D-alanine--D-alanine ligase (349 aa).

An ATP-grasp domain is found at 133–335 (QVLESATTIP…YSVLIEELVS (203 aa)). 163–218 (EEKLIYPVFVKPANMGSSVGISKAENRTDLKQAIALALKYDSRVLIEQGVDAREIE) provides a ligand contact to ATP. Mg(2+) contacts are provided by Asp-289, Glu-302, and Asn-304.

Belongs to the D-alanine--D-alanine ligase family. Mg(2+) is required as a cofactor. Mn(2+) serves as cofactor.

The protein localises to the cytoplasm. The enzyme catalyses 2 D-alanine + ATP = D-alanyl-D-alanine + ADP + phosphate + H(+). Its pathway is cell wall biogenesis; peptidoglycan biosynthesis. Cell wall formation. This chain is D-alanine--D-alanine ligase, found in Streptococcus mutans serotype c (strain ATCC 700610 / UA159).